The sequence spans 228 residues: Ribonuclease HII (228 aa).

Residues 11 to 202 form the RNase H type-2 domain; that stretch reads GPVAGVDEAG…VVAAAQLHGM (192 aa). Residues aspartate 17, glutamate 18, and aspartate 111 each coordinate a divalent metal cation.

It belongs to the RNase HII family. Requires Mn(2+) as cofactor. Mg(2+) serves as cofactor.

It localises to the cytoplasm. The enzyme catalyses Endonucleolytic cleavage to 5'-phosphomonoester.. Endonuclease that specifically degrades the RNA of RNA-DNA hybrids. The chain is Ribonuclease HII from Saccharopolyspora erythraea (strain ATCC 11635 / DSM 40517 / JCM 4748 / NBRC 13426 / NCIMB 8594 / NRRL 2338).